A 207-amino-acid chain; its full sequence is Ribosomal RNA small subunit methyltransferase G (207 aa).

S-adenosyl-L-methionine is bound by residues Gly75, Met80, 126–127 (VE), and Arg141.

It belongs to the methyltransferase superfamily. RNA methyltransferase RsmG family.

Its subcellular location is the cytoplasm. The enzyme catalyses guanosine(527) in 16S rRNA + S-adenosyl-L-methionine = N(7)-methylguanosine(527) in 16S rRNA + S-adenosyl-L-homocysteine. Its function is as follows. Specifically methylates the N7 position of guanine in position 527 of 16S rRNA. The polypeptide is Ribosomal RNA small subunit methyltransferase G (Laribacter hongkongensis (strain HLHK9)).